A 96-amino-acid chain; its full sequence is Large ribosomal subunit protein uL23 (96 aa).

This sequence belongs to the universal ribosomal protein uL23 family. Part of the 50S ribosomal subunit. Contacts protein L29, and trigger factor when it is bound to the ribosome.

Its function is as follows. One of the early assembly proteins it binds 23S rRNA. One of the proteins that surrounds the polypeptide exit tunnel on the outside of the ribosome. Forms the main docking site for trigger factor binding to the ribosome. This chain is Large ribosomal subunit protein uL23, found in Syntrophus aciditrophicus (strain SB).